A 401-amino-acid chain; its full sequence is E3 ubiquitin-protein ligase RGLG4 (401 aa).

A disordered region spans residues 1–43 (MTMGNFLKRFGSGKSRSSRNMTLGTTSSQSHEPSPSDPSLSLA). Residues 8–19 (KRFGSGKSRSSR) are compositionally biased toward low complexity. Residues 20–32 (NMTLGTTSSQSHE) are compositionally biased toward polar residues. One can recognise a VWFA domain in the interval 79 to 299 (NLILGVDFTK…KETAFALAAL (221 aa)). A disordered region spans residues 326–350 (VPRPPPIPYTPPTNAELPSTASPAS). The span at 327-336 (PRPPPIPYTP) shows a compositional bias: pro residues. Positions 341–350 (ELPSTASPAS) are enriched in polar residues. The RING-type zinc-finger motif lies at 357-390 (CPICLTNRKDVAFSCGHMTCGDCGSKISNCPICR).

As to quaternary structure, interacts with UBC30, GRXS17 and GLB3. In terms of tissue distribution, widely expressed.

The protein resides in the cytoplasm. It is found in the nucleus. It catalyses the reaction S-ubiquitinyl-[E2 ubiquitin-conjugating enzyme]-L-cysteine + [acceptor protein]-L-lysine = [E2 ubiquitin-conjugating enzyme]-L-cysteine + N(6)-ubiquitinyl-[acceptor protein]-L-lysine.. In terms of biological role, possesses E3 ubiquitin-protein ligase in vitro. Acts as upstream modulator of jasmonate (JA) signaling in response to various stimuli, such as JA-inhibited root growth, JA-inductive gene expression, coronatine-mediated pathogen susceptibility, wound-stimulated expression of JA-responsive genes and wound-induced JA biosynthesis. Controls fumonisin B1 (FB1)-triggered programmed cell death (PCD) by modulating the JA signaling pathway. May mediate salicylic acid (SA) suppression of JA signaling in FB1-induced responses. May mediate the formation of 'Lys-48'-linked multiubiquitin chains. Mediates the polyubiquitination and subsequent proteasomal degradation of the target protein GRXS17. This chain is E3 ubiquitin-protein ligase RGLG4, found in Arabidopsis thaliana (Mouse-ear cress).